The following is a 1222-amino-acid chain: ATP-dependent helicase/nuclease subunit A (1222 aa).

A UvrD-like helicase ATP-binding domain is found at 39-495 (QKRTAQQIEA…ILLKENFRSQ (457 aa)). 60–67 (ASAGSGKT) contacts ATP. The 287-residue stretch at 524–810 (QLIAGSHAQT…NLMTIHKSKG (287 aa)) folds into the UvrD-like helicase C-terminal domain.

The protein belongs to the helicase family. AddA subfamily. Heterodimer of AddA and AddB/RexB. It depends on Mg(2+) as a cofactor.

It catalyses the reaction Couples ATP hydrolysis with the unwinding of duplex DNA by translocating in the 3'-5' direction.. It carries out the reaction ATP + H2O = ADP + phosphate + H(+). Functionally, the heterodimer acts as both an ATP-dependent DNA helicase and an ATP-dependent, dual-direction single-stranded exonuclease. Recognizes the chi site generating a DNA molecule suitable for the initiation of homologous recombination. The AddA nuclease domain is required for chi fragment generation; this subunit has the helicase and 3' -&gt; 5' nuclease activities. This chain is ATP-dependent helicase/nuclease subunit A, found in Streptococcus pyogenes serotype M4 (strain MGAS10750).